Consider the following 317-residue polypeptide: Egg-laying defective protein 26 (317 aa).

The region spanning glutamate 156–aspartate 277 is the LRAT domain. Residues histidine 166 and histidine 178 contribute to the active site. Catalysis depends on cysteine 261, which acts as the Acyl-thioester intermediate.

As to expression, highly expressed in the cells of the spermatheca, the mouth, and the lining of the pharynx, the rectum, and the excretory canal. Also expressed in the pharyngeal intestinal junction cell.

It localises to the apical cell membrane. Functionally, putative acyltransferase. Plays a role in the morphogenesis of a vulval toroid cell, vulF, which is located where the vulva and the uterus connect. Not required for specifying vulval cell fate. The chain is Egg-laying defective protein 26 from Caenorhabditis elegans.